The chain runs to 1134 residues: Envelopment polyprotein (1134 aa).

The signal sequence occupies residues Met-1–Ala-16. The Lumenal portion of the chain corresponds to Leu-17–Ala-484. 10 cysteine pairs are disulfide-bonded: Cys-27–Cys-149, Cys-61–Cys-155, Cys-107–Cys-126, Cys-131–Cys-136, Cys-173–Cys-183, Cys-208–Cys-245, Cys-232–Cys-349, Cys-374–Cys-433, Cys-378–Cys-387, and Cys-403–Cys-422. N-linked (GlcNAc...) asparagine; by host glycosylation occurs at Asn-132. 2 N-linked (GlcNAc...) asparagine; by host glycosylation sites follow: Asn-233 and Asn-345. Asn-397 carries N-linked (GlcNAc...) asparagine; by host glycosylation. A helical transmembrane segment spans residues Leu-485–Leu-504. Topologically, residues Leu-505–Tyr-626 are cytoplasmic. Residues Leu-514–Lys-531 form a binding to the ribonucleoprotein region. CCHC-type zinc fingers lie at residues Cys-543–Cys-563 and Cys-568–Cys-589. Binding to the ribonucleoprotein stretches follow at residues Tyr-586 to Val-603, Gln-590 to Lys-601, and Trp-609 to Ser-623. The region spanning Trp-609 to Thr-632 is the ITAM domain. The YxxL signature appears at Tyr-613–Leu-616. A helical transmembrane segment spans residues Ile-627 to Ala-647. The Lumenal segment spans residues Glu-648 to Trp-1105. Disulfide bonds link Cys-734–Cys-769, Cys-738–Cys-776, Cys-750–Cys-884, Cys-764–Cys-895, Cys-779–Cys-903, Cys-805–Cys-814, Cys-822–Cys-831, and Cys-862–Cys-866. Residues Tyr-756–Cys-776 form a fusion loop region. Asn-927 carries N-linked (GlcNAc...) asparagine; by host glycosylation. 5 disulfides stabilise this stretch: Cys-969–Cys-999, Cys-992–Cys-1044, Cys-1009–Cys-1014, Cys-1045–Cys-1050, and Cys-1084–Cys-1088. A helical membrane pass occupies residues Val-1106–Leu-1125. A binding to the ribonucleoprotein region spans residues Leu-1121 to Ser-1134. The Cytoplasmic segment spans residues Cys-1126–Ser-1134.

Belongs to the hantavirus envelope glycoprotein family. As to quaternary structure, homodimer. Homotetramer; forms heterotetrameric Gn-Gc spikes in the pre-fusion conformation. Interacts (via C-terminus) with the nucleoprotein. Interacts with host TUFM; this interaction contributes to the virus-induced degradation of mitochondria by autophagy, which leads to degradation of host MAVS and inhibition of type I interferon (IFN) responses. Interacts with host MAP1LC3B; this interaction contributes to the virus-induced degradation of mitochondria by autophagy, which leads to degradation of host MAVS and inhibition of type I interferon (IFN) responses. Homodimer. Homotetramer; forms heterotetrameric Gn-Gc spikes in the pre-fusion conformation. Homotrimer; forms homotrimer in the post-fusion conformation at acidic pH. Interacts (via C-terminus) with the nucleoprotein. Envelope polyprotein precursor is quickly cleaved in vivo just after synthesis, presumably by host signal peptidase.

It localises to the virion membrane. The protein resides in the host cell surface. Its subcellular location is the host Golgi apparatus membrane. The protein localises to the host endoplasmic reticulum membrane. It is found in the host mitochondrion. Forms homotetramers with glycoprotein C at the surface of the virion. Attaches the virion to host cell receptors including integrin ITGAV/ITGB3. This attachment induces virion internalization predominantly through clathrin-dependent endocytosis. Mediates the assembly and budding of infectious virus particles through its interaction with the nucleocapsid protein and the viral genome. May dysregulate normal immune and endothelial cell responses through an ITAM motif. Translocates to mitochondria, binds to host TUFM and recruits MAP1LC3B. These interactions induce mitochondrial autophagy and therefore destruction of host MAVS leading to inhibition of type I interferon (IFN) responses. Concomitant breakdown of glycoprotein N is apparently prevented by the nucleoprotein that may inhibit Gn-stimulated autophagosome-lysosome fusion. Interacts with the viral genomic RNA. Functionally, forms homotetramers with glycoprotein N at the surface of the virion. Attaches the virion to host cell receptors including integrin ITGAV/ITGB3. This attachment induces virion internalization predominantly through clathrin-dependent endocytosis. Class II fusion protein that promotes fusion of viral membrane with host endosomal membrane after endocytosis of the virion. This Homo sapiens (Human) protein is Envelopment polyprotein (GP).